Consider the following 257-residue polypeptide: UPF0246 protein BPP3440 (257 aa).

The protein belongs to the UPF0246 family.

The polypeptide is UPF0246 protein BPP3440 (Bordetella parapertussis (strain 12822 / ATCC BAA-587 / NCTC 13253)).